The sequence spans 586 residues: Phosphoenolpyruvate-protein phosphotransferase (586 aa).

The Tele-phosphohistidine intermediate role is filled by histidine 201. Arginine 308 and arginine 345 together coordinate phosphoenolpyruvate. 2 residues coordinate Mg(2+): glutamate 446 and aspartate 470. Phosphoenolpyruvate-binding positions include 469 to 470 (ND) and arginine 480. Cysteine 517 functions as the Proton donor in the catalytic mechanism.

It belongs to the PEP-utilizing enzyme family. In terms of assembly, homodimer. It depends on Mg(2+) as a cofactor.

It localises to the cytoplasm. It catalyses the reaction L-histidyl-[protein] + phosphoenolpyruvate = N(pros)-phospho-L-histidyl-[protein] + pyruvate. In terms of biological role, general (non sugar-specific) component of the phosphoenolpyruvate-dependent sugar phosphotransferase system (sugar PTS). This major carbohydrate active-transport system catalyzes the phosphorylation of incoming sugar substrates concomitantly with their translocation across the cell membrane. Enzyme I transfers the phosphoryl group from phosphoenolpyruvate (PEP) to the phosphoryl carrier protein (HPr). The chain is Phosphoenolpyruvate-protein phosphotransferase from Cupriavidus necator (strain ATCC 17699 / DSM 428 / KCTC 22496 / NCIMB 10442 / H16 / Stanier 337) (Ralstonia eutropha).